A 497-amino-acid polypeptide reads, in one-letter code: SPI-2 type 3 secretion system secretin (497 aa).

A signal peptide spans 1 to 20; it reads MVVNKRLILILLFILNTAKS.

Belongs to the bacterial secretin family. T3SS SctC subfamily. The core secretion machinery of the T3SS is composed of approximately 20 different proteins, including cytoplasmic components, a base, an export apparatus and a needle. This subunit is part of the base, which anchors the injectisome in the bacterial cell envelope. Forms a stable homooligomeric complex.

It localises to the cell outer membrane. Component of the type III secretion system (T3SS), also called injectisome, which is used to inject bacterial effector proteins into eukaryotic host cells. Forms a ring-shaped multimeric structure with an apparent central pore in the outer membrane. Required for secretion of some type III-secreted effectors including the SpvB exotoxin. The protein is SPI-2 type 3 secretion system secretin of Salmonella typhimurium (strain 14028s / SGSC 2262).